Reading from the N-terminus, the 992-residue chain is MATIMIGSMAISVPNTHVSCASNSVMPVQAVQMAKQVPSARGVLYTLKREGSTQVHKHEEALRKFQEAFDQDVGIQRRLLVNKHSSIQSTKKNGLTLRRLTLEQARAKEAAIARRKQEEEDFLNGKYEQQFYAGVSATKSMKFEGGSVGFRTKYWRPTPKKTKERRATSQCRKPTYVLEEVLSIASKSGKLVEFITGKGKRVKVCYVRKHGAILPKFSLPHEEGKYIHQELQYASTYEFLPYICMFAKYKSINADDITYGDSGLLFDERSSLTTNHTKLPYFVVRGRRNGKLVNALEVVENMEDIQHYSQNPEAQFFRGWKKVFDKMPPHVENHECTTDFTNEQCGELAAAISQSIFPVKKLSCKQCRQHIKHLSWEEYKQFLLAHMGCHGPEWETFQEIDGMRYVKRVIETSTAENASLQTSLEIVRLTQNYKSTHMLQIQDINKALMKGPSVTQSELEQASKQLLAMTQWWKNHMTLTDEDALKVFRNKRSSKALLNPSLLCDNQLDKNGNFVWGERGRHSKRFFANYFEEVVPSEGYSKYVIRKNPNGQRELAIGSLIVPLDFERARMALQGKSVTREPITMSCISRQDGNFVYPCCCVTHDDGKAFYSELRSPTKRHLVIGTSGDPKYIDLPATDADRMYIAKEGFCYLNIFLAMLVNVNEDEAKDFTKMVRDVIVPRLGKWPTMLDVATAAYMLTVFHPETRNAELPRILVDHACQTMHVIDSFGSLTVGYHVLKAGTVNQLIQFASNDLQSEMKFYRVGGEVQQRMKCETALITSIFKPKRMIQILENDPYILLMGLVSPSILIHMYRMKHFEKGVELWISKEHSVAKIFIILEQLTKRVAANDVLLEQLEMISETSERFMSILEDCPQAPHSYKTAKDLLTMYIERKASNNQLVENGFVDMNDKLYMAYEKNLLRSLEAGMARIKLVGKIFYNMAIEKICSTYGEMFDKESCRRKQRIFRKLCECVLHECPVTPKKCKKYTFPKM.

The Peptidase S30 domain maps to 168 to 308 (TSQCRKPTYV…VENMEDIQHY (141 aa)). Catalysis depends on for P1 proteinase activity residues histidine 221, glutamate 230, and serine 262. The short motif at 361–364 (KLSC) is the Involved in interaction with stylet and aphid transmission element. The Involved in virions binding and aphid transmission motif lies at 617–619 (PTK). In terms of domain architecture, Peptidase C6 spans 643–765 (MYIAKEGFCY…QSEMKFYRVG (123 aa)). Catalysis depends on for helper component proteinase activity residues cysteine 651 and histidine 724.

It belongs to the potyviridae P3N-PIPO polyprotein family. Interacts (via PIPO domain) with host PCaP1 protein; this interaction may help to anchor the movement complex to the plasma membrane from which the complex could move to the plasmodesmata. Potyviral RNA is expressed as two polyproteins which undergo post-translational proteolytic processing. Genome polyprotein is processed by NIa-pro, P1 and HC-pro proteinases resulting in the production of at least ten individual proteins. P3N-PIPO is cleaved by P1 and HC-pro proteinases resulting in the production of three individual proteins. The P1 proteinase and the HC-pro cleave only their respective C-termini autocatalytically.

The protein resides in the host cell junction. Its subcellular location is the host plasmodesma. It catalyses the reaction Hydrolyzes a Gly-|-Gly bond at its own C-terminus, commonly in the sequence -Tyr-Xaa-Val-Gly-|-Gly, in the processing of the potyviral polyprotein.. Functionally, required for aphid transmission and also has proteolytic activity. Only cleaves a Gly-Gly dipeptide at its own C-terminus. Interacts with virions and aphid stylets. Acts as a suppressor of RNA-mediated gene silencing, also known as post-transcriptional gene silencing (PTGS), a mechanism of plant viral defense that limits the accumulation of viral RNAs. May have RNA-binding activity. In terms of biological role, allows efficient cell to cell propagation, by bypassing the host cell wall barrier. Transports viral genome to neighboring plant cells directly through plasmosdesmata, without any budding. The protein is P3N-PIPO polyprotein of Glycine max (Soybean).